The sequence spans 34 residues: Phalloidin proprotein (34 aa).

Residues 1–10 constitute a propeptide that is removed on maturation; the sequence is MSDINTTCLP. The segment at residues 11–17 is a cross-link (cyclopeptide (Ala-Pro)); that stretch reads AWLATCP. A cross-link (2'-cysteinyl-6'-hydroxytryptophan sulfoxide (Trp-Cys)) is located at residues 12 to 16; that stretch reads WLATC. The propeptide occupies 18–34; that stretch reads CTGDDVNPTLTCGESLC.

It belongs to the MSDIN fungal toxin family. Post-translationally, processed by the macrocyclase-peptidase enzyme POPB to yield a toxic cyclic heptapeptide. POPB first removes 10 residues from the N-terminus. Conformational trapping of the remaining peptide forces the enzyme to release this intermediate rather than proceed to macrocyclization. The enzyme rebinds the remaining peptide in a different conformation and catalyzes macrocyclization of the N-terminal 7 residues.

Functionally, toxin that belongs to the bicyclic heptapeptides called phallotoxins. Although structurally related to amatoxins, phallotoxins have a different mode of action, which is the stabilization of F-actin. Phallotoxins are poisonous when administered parenterally, but not orally because of poor absorption. This Amanita phalloides (Death cap) protein is Phalloidin proprotein.